The sequence spans 569 residues: Peroxisomal targeting signal receptor (569 aa).

A Glycyl cysteine thioester (Cys-Gly) (interchain with G-Cter in ubiquitin) cross-link involves residue Cys9. Positions 10 to 32 (AANANPLAQFFKQSQHDTSLEQS) are amphipathic helix 1 (AH1). Lys21 participates in a covalent cross-link: Glycyl lysine isopeptide (Lys-Gly) (interchain with G-Cter in ubiquitin). A disordered region spans residues 23–42 (SQHDTSLEQSLRNSAHDTHQ). The interval 57 to 72 (RAHMEQFMNQSTPFNF) is amphipathic helix 2 (AH2). 2 short sequence motifs (wxxxF/Y motif) span residues 118-122 (WSSEF) and 183-187 (WEQQF). The interval 218 to 234 (FDQVWDNIQETYADNML) is amphipathic helix 4 (AH4). A WxxxF/Y motif 3 motif is present at residues 243–247 (WEKDF). TPR repeat units follow at residues 272-305 (LDAY…NPGH), 306-339 (VDAW…SPQN), 340-377 (LVAL…VAER), 378-415 (ARNA…ANMD), 416-449 (SEVQ…NPND), 450-483 (ALAW…NPNF), and 484-517 (VRAR…HEVE).

The protein belongs to the peroxisomal targeting signal receptor family. Interacts (via WxxxF/Y and LVxEF motifs) with PEX14; promoting translocation through the PEX13-PEX14 docking complex. In terms of processing, monoubiquitinated at Cys-9 by PEX2 during PEX5 passage through the retrotranslocation channel: monoubiquitination acts as a signal for PEX5 extraction and is required for proper export from peroxisomes and recycling. When PEX5 recycling is compromised, polyubiquitinated at Lys-21 by PEX10 during its passage through the retrotranslocation channel, leading to its degradation.

It localises to the cytoplasm. Its subcellular location is the cytosol. It is found in the peroxisome matrix. Receptor that mediates peroxisomal import of proteins containing a C-terminal PTS1-type tripeptide peroxisomal targeting signal (SKL-type). Binds to cargo proteins containing a PTS1 peroxisomal targeting signal in the cytosol, and translocates them into the peroxisome matrix by passing through the PEX13-PEX14 docking complex along with cargo proteins. PEX5 receptor is then retrotranslocated into the cytosol, leading to release of bound cargo in the peroxisome matrix, and reset for a subsequent peroxisome import cycle. The sequence is that of Peroxisomal targeting signal receptor (PEX5) from Pichia angusta (Yeast).